A 514-amino-acid polypeptide reads, in one-letter code: RNA-splicing ligase RtcB homolog (514 aa).

Positions 128, 131, 236, 268, and 362 each coordinate Mn(2+). 235–239 contacts GMP; that stretch reads NHYAE. GMP contacts are provided by residues 362–363, 411–414, serine 418, 437–440, and lysine 513; these read HN, GGTM, and HGAG. Histidine 437 functions as the GMP-histidine intermediate in the catalytic mechanism.

This sequence belongs to the RtcB family. Catalytic component of the tRNA-splicing ligase complex. The cofactor is Mn(2+).

The enzyme catalyses a 3'-end 3'-phospho-ribonucleotide-RNA + a 5'-end dephospho-ribonucleoside-RNA + GTP = a ribonucleotidyl-ribonucleotide-RNA + GMP + diphosphate. It catalyses the reaction a 3'-end 2',3'-cyclophospho-ribonucleotide-RNA + a 5'-end dephospho-ribonucleoside-RNA + GTP + H2O = a ribonucleotidyl-ribonucleotide-RNA + GMP + diphosphate + H(+). Functionally, catalytic subunit of the tRNA-splicing ligase complex that acts by directly joining spliced tRNA halves to mature-sized tRNAs by incorporating the precursor-derived splice junction phosphate into the mature tRNA as a canonical 3',5'-phosphodiester. May act as an RNA ligase with broad substrate specificity, and may function toward other RNAs. The polypeptide is RNA-splicing ligase RtcB homolog (Ostreococcus lucimarinus (strain CCE9901)).